Consider the following 451-residue polypeptide: Cytochrome c biogenesis protein CcsB (451 aa).

3 consecutive transmembrane segments (helical) span residues 30–50 (LRLAIVLLLAIALFSISGTVI), 89–109 (TWWFLSLLVLFGTSLTTCTFT), and 175–195 (IGPIVVHAAMLIILGGAIWGA).

Belongs to the Ccs1/CcsB family. May interact with CcsA.

The protein resides in the cellular thylakoid membrane. Functionally, required during biogenesis of c-type cytochromes (cytochrome c6 and cytochrome f) at the step of heme attachment. The chain is Cytochrome c biogenesis protein CcsB from Crocosphaera subtropica (strain ATCC 51142 / BH68) (Cyanothece sp. (strain ATCC 51142)).